The sequence spans 110 residues: BolA-like protein 3 (110 aa).

The protein belongs to the BolA/IbaG family. As to quaternary structure, interacts with NFU1.

Its subcellular location is the mitochondrion. Its function is as follows. Acts as a mitochondrial iron-sulfur (Fe-S) cluster assembly factor that facilitates (Fe-S) cluster insertion into a subset of mitochondrial proteins. Probably acts together with NFU1. This is BolA-like protein 3 (BOLA3) from Bos taurus (Bovine).